Here is a 177-residue protein sequence, read N- to C-terminus: Hypoxanthine phosphoribosyltransferase (177 aa).

Arg43 and Gly44 together coordinate diphosphate. Glu99 is a binding site for GMP. Residue Glu99 participates in IMP binding. Residues Glu99 and Asp100 each contribute to the Mg(2+) site. Residue Asp103 is the Proton acceptor of the active site. Residues 103-108 (DSGKTL), Lys131, and Asp159 contribute to the GMP site. IMP is bound by residues 103–108 (DSGKTL) and Lys131. Arg165 is a diphosphate binding site.

It belongs to the purine/pyrimidine phosphoribosyltransferase family. As to quaternary structure, homotetramer. It depends on Mg(2+) as a cofactor.

It localises to the cytoplasm. It carries out the reaction IMP + diphosphate = hypoxanthine + 5-phospho-alpha-D-ribose 1-diphosphate. The catalysed reaction is GMP + diphosphate = guanine + 5-phospho-alpha-D-ribose 1-diphosphate. It functions in the pathway purine metabolism; IMP biosynthesis via salvage pathway; IMP from hypoxanthine: step 1/1. In terms of biological role, purine salvage pathway enzyme which catalyzes the transfer of the ribosyl-5-phosphate group from 5-phospho-alpha-D-ribose 1-diphosphate (PRPP) to the N9 position of hypoxanthine to yield IMP (inosine 5'-monophosphate). To a lesser extent, can also act on guanine leading to GMP, but shows a highly less efficient activity with xanthine. The sequence is that of Hypoxanthine phosphoribosyltransferase (hpt) from Buchnera aphidicola subsp. Schizaphis graminum (strain Sg).